The primary structure comprises 85 residues: Contulakin-Lt2 (85 aa).

Positions 1-22 (MQMAYWVMVMMMVGITAPLSEG) are cleaved as a signal peptide. The propeptide occupies 23–61 (RKLNDAIRGLVPNDLTPQLLQSLVSRRHRVFHLDNTYLK). A disulfide bridge connects residues cysteine 65 and cysteine 70. Positions 76-85 (RRRDLKKRNK) are excised as a propeptide.

This sequence belongs to the conotoxin C superfamily. In terms of tissue distribution, expressed by the venom duct.

It localises to the secreted. Its function is as follows. Acts as an agonist of neurotensin receptors. It binds to human neurotensin type 1 receptor (NTSR1), rat neurotensin types 1 and 2 receptors (NTSR1/NTSR2) and mouse neurotensin type 3 receptor (SORT1). The chain is Contulakin-Lt2 from Conus litteratus (Lettered cone).